The following is a 193-amino-acid chain: Xanthine phosphoribosyltransferase (193 aa).

Residues Leu-20 and Asn-27 each coordinate xanthine. Residue 128–132 (ANGEA) participates in 5-phospho-alpha-D-ribose 1-diphosphate binding. Residue Lys-156 coordinates xanthine.

The protein belongs to the purine/pyrimidine phosphoribosyltransferase family. Xpt subfamily. Homodimer.

The protein resides in the cytoplasm. The catalysed reaction is XMP + diphosphate = xanthine + 5-phospho-alpha-D-ribose 1-diphosphate. The protein operates within purine metabolism; XMP biosynthesis via salvage pathway; XMP from xanthine: step 1/1. Functionally, converts the preformed base xanthine, a product of nucleic acid breakdown, to xanthosine 5'-monophosphate (XMP), so it can be reused for RNA or DNA synthesis. This chain is Xanthine phosphoribosyltransferase, found in Exiguobacterium sp. (strain ATCC BAA-1283 / AT1b).